The primary structure comprises 221 residues: Ribosomal RNA large subunit methyltransferase E (221 aa).

Residues glycine 72, tryptophan 74, aspartate 91, aspartate 107, and aspartate 131 each coordinate S-adenosyl-L-methionine. The Proton acceptor role is filled by lysine 171.

Belongs to the class I-like SAM-binding methyltransferase superfamily. RNA methyltransferase RlmE family.

The protein localises to the cytoplasm. It catalyses the reaction uridine(2552) in 23S rRNA + S-adenosyl-L-methionine = 2'-O-methyluridine(2552) in 23S rRNA + S-adenosyl-L-homocysteine + H(+). Functionally, specifically methylates the uridine in position 2552 of 23S rRNA at the 2'-O position of the ribose in the fully assembled 50S ribosomal subunit. In Zymomonas mobilis subsp. mobilis (strain ATCC 31821 / ZM4 / CP4), this protein is Ribosomal RNA large subunit methyltransferase E.